A 233-amino-acid polypeptide reads, in one-letter code: Phosphoribosylformylglycinamidine synthase subunit PurQ (233 aa).

The Glutamine amidotransferase type-1 domain occupies 3 to 233 (SAILVFPGIN…GLVAHLERAA (231 aa)). Residue cysteine 87 is the Nucleophile of the active site. Catalysis depends on residues histidine 204 and glutamate 206.

As to quaternary structure, part of the FGAM synthase complex composed of 1 PurL, 1 PurQ and 2 PurS subunits.

It localises to the cytoplasm. It catalyses the reaction N(2)-formyl-N(1)-(5-phospho-beta-D-ribosyl)glycinamide + L-glutamine + ATP + H2O = 2-formamido-N(1)-(5-O-phospho-beta-D-ribosyl)acetamidine + L-glutamate + ADP + phosphate + H(+). It carries out the reaction L-glutamine + H2O = L-glutamate + NH4(+). The protein operates within purine metabolism; IMP biosynthesis via de novo pathway; 5-amino-1-(5-phospho-D-ribosyl)imidazole from N(2)-formyl-N(1)-(5-phospho-D-ribosyl)glycinamide: step 1/2. Functionally, part of the phosphoribosylformylglycinamidine synthase complex involved in the purines biosynthetic pathway. Catalyzes the ATP-dependent conversion of formylglycinamide ribonucleotide (FGAR) and glutamine to yield formylglycinamidine ribonucleotide (FGAM) and glutamate. The FGAM synthase complex is composed of three subunits. PurQ produces an ammonia molecule by converting glutamine to glutamate. PurL transfers the ammonia molecule to FGAR to form FGAM in an ATP-dependent manner. PurS interacts with PurQ and PurL and is thought to assist in the transfer of the ammonia molecule from PurQ to PurL. The sequence is that of Phosphoribosylformylglycinamidine synthase subunit PurQ from Nitrobacter hamburgensis (strain DSM 10229 / NCIMB 13809 / X14).